Here is a 138-residue protein sequence, read N- to C-terminus: Large ribosomal subunit protein uL16 (138 aa).

Basic residues predominate over residues 1 to 13 (MLQPARRKYRKEQ). Residues 1–21 (MLQPARRKYRKEQKGRNTGIA) are disordered.

Belongs to the universal ribosomal protein uL16 family. Part of the 50S ribosomal subunit.

In terms of biological role, binds 23S rRNA and is also seen to make contacts with the A and possibly P site tRNAs. The polypeptide is Large ribosomal subunit protein uL16 (Albidiferax ferrireducens (strain ATCC BAA-621 / DSM 15236 / T118) (Rhodoferax ferrireducens)).